Here is a 337-residue protein sequence, read N- to C-terminus: 4-hydroxythreonine-4-phosphate dehydrogenase (337 aa).

Residues His138 and Thr139 each coordinate substrate. Residues His168, His212, and His267 each contribute to the a divalent metal cation site. 3 residues coordinate substrate: Lys275, Asn284, and Arg293.

The protein belongs to the PdxA family. In terms of assembly, homodimer. Zn(2+) is required as a cofactor. Mg(2+) serves as cofactor. The cofactor is Co(2+).

The protein resides in the cytoplasm. It carries out the reaction 4-(phosphooxy)-L-threonine + NAD(+) = 3-amino-2-oxopropyl phosphate + CO2 + NADH. The protein operates within cofactor biosynthesis; pyridoxine 5'-phosphate biosynthesis; pyridoxine 5'-phosphate from D-erythrose 4-phosphate: step 4/5. Catalyzes the NAD(P)-dependent oxidation of 4-(phosphooxy)-L-threonine (HTP) into 2-amino-3-oxo-4-(phosphooxy)butyric acid which spontaneously decarboxylates to form 3-amino-2-oxopropyl phosphate (AHAP). The protein is 4-hydroxythreonine-4-phosphate dehydrogenase of Beijerinckia indica subsp. indica (strain ATCC 9039 / DSM 1715 / NCIMB 8712).